Here is a 184-residue protein sequence, read N- to C-terminus: Probable RNA 2'-phosphotransferase (184 aa).

This sequence belongs to the KptA/TPT1 family.

Its function is as follows. Removes the 2'-phosphate from RNA via an intermediate in which the phosphate is ADP-ribosylated by NAD followed by a presumed transesterification to release the RNA and generate ADP-ribose 1''-2''-cyclic phosphate (APPR&gt;P). May function as an ADP-ribosylase. The sequence is that of Probable RNA 2'-phosphotransferase from Escherichia coli O6:K15:H31 (strain 536 / UPEC).